We begin with the raw amino-acid sequence, 551 residues long: NAD(P)H-quinone oxidoreductase chain 4 (551 aa).

Helical transmembrane passes span 25-45 (FPWL…VPFI), 56-76 (WFAL…YLNG), 111-131 (LILL…PVTF), 133-153 (PKLF…VFAV), 157-177 (LLFF…LAIW), 189-209 (FILY…AMGF), 233-253 (LLCY…VPLH), 264-284 (TAPV…YALM), 298-318 (FAPL…LTSF), 335-355 (MGFV…GAML), 356-376 (QMIS…ATYD), 397-417 (FALW…SGFV), 438-458 (IVID…LLSM), and 485-505 (VYII…PRLM).

The protein belongs to the complex I subunit 4 family.

It is found in the cellular thylakoid membrane. It carries out the reaction a plastoquinone + NADH + (n+1) H(+)(in) = a plastoquinol + NAD(+) + n H(+)(out). It catalyses the reaction a plastoquinone + NADPH + (n+1) H(+)(in) = a plastoquinol + NADP(+) + n H(+)(out). Its function is as follows. NDH-1 shuttles electrons from NAD(P)H, via FMN and iron-sulfur (Fe-S) centers, to quinones in the respiratory chain. The immediate electron acceptor for the enzyme in this species is believed to be plastoquinone. Couples the redox reaction to proton translocation (for every two electrons transferred, four hydrogen ions are translocated across the cytoplasmic membrane), and thus conserves the redox energy in a proton gradient. The protein is NAD(P)H-quinone oxidoreductase chain 4 of Synechococcus sp. (strain WH7803).